Here is a 600-residue protein sequence, read N- to C-terminus: Elongation factor 4 (600 aa).

In terms of domain architecture, tr-type G spans 4 to 186; it reads SKIRNFSIIA…AIVEKIPSPS (183 aa). GTP-binding positions include 16 to 21 and 133 to 136; these read DHGKST and NKID.

The protein belongs to the TRAFAC class translation factor GTPase superfamily. Classic translation factor GTPase family. LepA subfamily.

It localises to the cell membrane. It carries out the reaction GTP + H2O = GDP + phosphate + H(+). In terms of biological role, required for accurate and efficient protein synthesis under certain stress conditions. May act as a fidelity factor of the translation reaction, by catalyzing a one-codon backward translocation of tRNAs on improperly translocated ribosomes. Back-translocation proceeds from a post-translocation (POST) complex to a pre-translocation (PRE) complex, thus giving elongation factor G a second chance to translocate the tRNAs correctly. Binds to ribosomes in a GTP-dependent manner. In Mycoplasma mycoides subsp. mycoides SC (strain CCUG 32753 / NCTC 10114 / PG1), this protein is Elongation factor 4.